We begin with the raw amino-acid sequence, 92 residues long: Small ribosomal subunit protein uS19 (92 aa).

Belongs to the universal ribosomal protein uS19 family.

Functionally, protein S19 forms a complex with S13 that binds strongly to the 16S ribosomal RNA. The polypeptide is Small ribosomal subunit protein uS19 (Roseobacter denitrificans (strain ATCC 33942 / OCh 114) (Erythrobacter sp. (strain OCh 114))).